The sequence spans 215 residues: UPF0502 protein Ping_1905 (215 aa).

The protein belongs to the UPF0502 family.

This Psychromonas ingrahamii (strain DSM 17664 / CCUG 51855 / 37) protein is UPF0502 protein Ping_1905.